The sequence spans 39 residues: Photosystem II reaction center protein L (39 aa).

Residues 18–38 form a helical membrane-spanning segment; that stretch reads SLYLGLLSVLVLGILFSSYFF.

The protein belongs to the PsbL family. In terms of assembly, PSII is composed of 1 copy each of membrane proteins PsbA, PsbB, PsbC, PsbD, PsbE, PsbF, PsbH, PsbI, PsbJ, PsbK, PsbL, PsbM, PsbT, PsbX, PsbY, Psb30/Ycf12, peripheral proteins PsbO, CyanoQ (PsbQ), PsbU, PsbV and a large number of cofactors. It forms dimeric complexes.

The protein resides in the cellular thylakoid membrane. In terms of biological role, one of the components of the core complex of photosystem II (PSII). PSII is a light-driven water:plastoquinone oxidoreductase that uses light energy to abstract electrons from H(2)O, generating O(2) and a proton gradient subsequently used for ATP formation. It consists of a core antenna complex that captures photons, and an electron transfer chain that converts photonic excitation into a charge separation. This subunit is found at the monomer-monomer interface and is required for correct PSII assembly and/or dimerization. The protein is Photosystem II reaction center protein L of Prochlorococcus marinus subsp. pastoris (strain CCMP1986 / NIES-2087 / MED4).